The sequence spans 401 residues: Argininosuccinate synthase (401 aa).

Residues 11 to 19 and Ala38 contribute to the ATP site; that span reads AYSGGLDTS. Residues Tyr89 and Ser94 each contribute to the L-citrulline site. ATP is bound at residue Gly119. Thr121, Asn125, and Asp126 together coordinate L-aspartate. Asn125 provides a ligand contact to L-citrulline. Residues Arg129, Ser177, Ser186, Glu262, and Tyr274 each coordinate L-citrulline.

The protein belongs to the argininosuccinate synthase family. Type 1 subfamily. As to quaternary structure, homotetramer.

Its subcellular location is the cytoplasm. The catalysed reaction is L-citrulline + L-aspartate + ATP = 2-(N(omega)-L-arginino)succinate + AMP + diphosphate + H(+). The protein operates within amino-acid biosynthesis; L-arginine biosynthesis; L-arginine from L-ornithine and carbamoyl phosphate: step 2/3. The sequence is that of Argininosuccinate synthase from Nitratidesulfovibrio vulgaris (strain DSM 19637 / Miyazaki F) (Desulfovibrio vulgaris).